Here is a 142-residue protein sequence, read N- to C-terminus: Large ribosomal subunit protein uL22c (142 aa).

The protein belongs to the universal ribosomal protein uL22 family. As to quaternary structure, part of the 50S ribosomal subunit.

It localises to the plastid. Its subcellular location is the chloroplast. Functionally, this protein binds specifically to 23S rRNA. The globular domain of the protein is located near the polypeptide exit tunnel on the outside of the subunit, while an extended beta-hairpin is found that lines the wall of the exit tunnel in the center of the 70S ribosome. The sequence is that of Large ribosomal subunit protein uL22c (rpl22) from Oenothera parviflora (Small-flowered evening primrose).